Reading from the N-terminus, the 450-residue chain is Isoleucine 2-epimerase (450 aa).

Residues 115 to 116 (GS), Tyr-142, and 250 to 253 (DEVN) contribute to the pyridoxal 5'-phosphate site. Residue Lys-280 is modified to N6-(pyridoxal phosphate)lysine. Thr-309 provides a ligand contact to pyridoxal 5'-phosphate.

It belongs to the class-III pyridoxal-phosphate-dependent aminotransferase family. As to quaternary structure, homotetramer. The cofactor is pyridoxal 5'-phosphate.

The enzyme catalyses L-isoleucine = D-allo-isoleucine. Catalyzes the epimerization of L-isoleucine to D-allo-isoleucine and D-allo-isoleucine to L-isoleucine. Can also catalyze the racemization of many nonpolar amino acids, including leucine and valine. Does not have GABA aminotransferase activity. The sequence is that of Isoleucine 2-epimerase from Lentilactobacillus buchneri (Lactobacillus buchneri).